Reading from the N-terminus, the 457-residue chain is Putative methyltransferase MT1451 (457 aa).

Residues 276 to 282 (CAGPGGK), Glu301, Asp325, and Asp341 each bind S-adenosyl-L-methionine. Cys394 functions as the Nucleophile in the catalytic mechanism.

The protein belongs to the class I-like SAM-binding methyltransferase superfamily. RsmB/NOP family.

Its function is as follows. May act as RNA methyltransferase. This is Putative methyltransferase MT1451 from Mycobacterium tuberculosis (strain CDC 1551 / Oshkosh).